A 235-amino-acid polypeptide reads, in one-letter code: Flagellar L-ring protein (235 aa).

The first 18 residues, 1 to 18 (MNKIAGTLFLLAGLAMAG), serve as a signal peptide directing secretion. A lipid anchor (N-palmitoyl cysteine) is attached at Cys19. Cys19 carries S-diacylglycerol cysteine lipidation.

The protein belongs to the FlgH family. The basal body constitutes a major portion of the flagellar organelle and consists of four rings (L,P,S, and M) mounted on a central rod.

It localises to the cell outer membrane. The protein resides in the bacterial flagellum basal body. Its function is as follows. Assembles around the rod to form the L-ring and probably protects the motor/basal body from shearing forces during rotation. This is Flagellar L-ring protein from Chelativorans sp. (strain BNC1).